The chain runs to 1944 residues: uncharacterized protein (1944 aa).

Positions 908-999 (SQNLNFLKSK…SESEEESSNG (92 aa)) are disordered. Composition is skewed to basic and acidic residues over residues 916 to 929 (SKQE…ESAK) and 939 to 949 (LSEKLNSDNHI). Residues 985–996 (SDEDTSESEEES) show a composition bias toward acidic residues. 1293–1300 (GPPGTGKT) contacts ATP. Residues 1824–1944 (QEAHKVKKRH…PPKVEHFKRK (121 aa)) form a disordered region. 2 stretches are compositionally biased toward basic and acidic residues: residues 1843–1852 (GTERDEDIPN) and 1869–1891 (KVTK…KIDE). The segment covering 1912–1922 (GHMKKSKKPKS) has biased composition (basic residues).

It belongs to the DNA2/NAM7 helicase family.

Its subcellular location is the nucleus. This is an uncharacterized protein from Schizosaccharomyces pombe (strain 972 / ATCC 24843) (Fission yeast).